Here is a 229-residue protein sequence, read N- to C-terminus: Large ribosomal subunit protein uL1 (229 aa).

This sequence belongs to the universal ribosomal protein uL1 family. As to quaternary structure, part of the 50S ribosomal subunit.

Functionally, binds directly to 23S rRNA. The L1 stalk is quite mobile in the ribosome, and is involved in E site tRNA release. In terms of biological role, protein L1 is also a translational repressor protein, it controls the translation of the L11 operon by binding to its mRNA. The chain is Large ribosomal subunit protein uL1 from Haemophilus influenzae (strain PittEE).